We begin with the raw amino-acid sequence, 219 residues long: Response regulator ArlR (219 aa).

Positions 3-116 (NILIVEDEQN…ELLARIRAVL (114 aa)) constitute a Response regulatory domain. Position 52 is a 4-aspartylphosphate (Asp-52). Residues 122 to 219 (KDVLDINGII…TVRGVGYVIR (98 aa)) constitute a DNA-binding region (ompR/PhoB-type).

Post-translationally, phosphorylated by ArlS.

It localises to the cytoplasm. In terms of biological role, member of the two-component regulatory system ArlS/ArlR. In Staphylococcus epidermidis (strain ATCC 35984 / DSM 28319 / BCRC 17069 / CCUG 31568 / BM 3577 / RP62A), this protein is Response regulator ArlR (arlR).